We begin with the raw amino-acid sequence, 228 residues long: ATP-dependent dethiobiotin synthetase BioD (228 aa).

12–17 (DVGKTY) is an ATP binding site. Thr16 is a binding site for Mg(2+). The active site involves Lys37. Residues Asp53, 114–117 (EGMG), 174–175 (ND), 203–205 (PFI), and Asn210 contribute to the ATP site. The Mg(2+) site is built by Asp53 and Glu114.

Belongs to the dethiobiotin synthetase family. Homodimer. It depends on Mg(2+) as a cofactor.

The protein resides in the cytoplasm. The catalysed reaction is (7R,8S)-7,8-diammoniononanoate + CO2 + ATP = (4R,5S)-dethiobiotin + ADP + phosphate + 3 H(+). The protein operates within cofactor biosynthesis; biotin biosynthesis; biotin from 7,8-diaminononanoate: step 1/2. In terms of biological role, catalyzes a mechanistically unusual reaction, the ATP-dependent insertion of CO2 between the N7 and N8 nitrogen atoms of 7,8-diaminopelargonic acid (DAPA, also called 7,8-diammoniononanoate) to form a ureido ring. In Nitrosopumilus maritimus (strain SCM1), this protein is ATP-dependent dethiobiotin synthetase BioD.